The chain runs to 208 residues: Holliday junction branch migration complex subunit RuvA (208 aa).

A domain I region spans residues 1–63; that stretch reads MIAFVSGPVA…EDSLTLYGFA (63 aa). The segment at 64–142 is domain II; sequence NDDERQVFEL…EPVGAHIGQQ (79 aa). Residues 143–147 form a flexible linker region; the sequence is GIGTP. Positions 148-208 are domain III; sequence VTSGWRDQLQ…AALQTLNRAR (61 aa).

Belongs to the RuvA family. In terms of assembly, homotetramer. Forms an RuvA(8)-RuvB(12)-Holliday junction (HJ) complex. HJ DNA is sandwiched between 2 RuvA tetramers; dsDNA enters through RuvA and exits via RuvB. An RuvB hexamer assembles on each DNA strand where it exits the tetramer. Each RuvB hexamer is contacted by two RuvA subunits (via domain III) on 2 adjacent RuvB subunits; this complex drives branch migration. In the full resolvosome a probable DNA-RuvA(4)-RuvB(12)-RuvC(2) complex forms which resolves the HJ.

The protein resides in the cytoplasm. Its function is as follows. The RuvA-RuvB-RuvC complex processes Holliday junction (HJ) DNA during genetic recombination and DNA repair, while the RuvA-RuvB complex plays an important role in the rescue of blocked DNA replication forks via replication fork reversal (RFR). RuvA specifically binds to HJ cruciform DNA, conferring on it an open structure. The RuvB hexamer acts as an ATP-dependent pump, pulling dsDNA into and through the RuvAB complex. HJ branch migration allows RuvC to scan DNA until it finds its consensus sequence, where it cleaves and resolves the cruciform DNA. The protein is Holliday junction branch migration complex subunit RuvA of Streptomyces griseus subsp. griseus (strain JCM 4626 / CBS 651.72 / NBRC 13350 / KCC S-0626 / ISP 5235).